Consider the following 271-residue polypeptide: 4-hydroxy-tetrahydrodipicolinate reductase (271 aa).

NAD(+) is bound by residues 11–16 and glutamate 37; that span reads GGSGRM. Arginine 38 serves as a coordination point for NADP(+). NAD(+) is bound by residues 101 to 103 and 125 to 128; these read GTT and APNM. Histidine 158 acts as the Proton donor/acceptor in catalysis. Position 159 (histidine 159) interacts with (S)-2,3,4,5-tetrahydrodipicolinate. The Proton donor role is filled by lysine 162. 168-169 contributes to the (S)-2,3,4,5-tetrahydrodipicolinate binding site; that stretch reads GT.

Belongs to the DapB family.

It localises to the cytoplasm. It carries out the reaction (S)-2,3,4,5-tetrahydrodipicolinate + NAD(+) + H2O = (2S,4S)-4-hydroxy-2,3,4,5-tetrahydrodipicolinate + NADH + H(+). The enzyme catalyses (S)-2,3,4,5-tetrahydrodipicolinate + NADP(+) + H2O = (2S,4S)-4-hydroxy-2,3,4,5-tetrahydrodipicolinate + NADPH + H(+). The protein operates within amino-acid biosynthesis; L-lysine biosynthesis via DAP pathway; (S)-tetrahydrodipicolinate from L-aspartate: step 4/4. In terms of biological role, catalyzes the conversion of 4-hydroxy-tetrahydrodipicolinate (HTPA) to tetrahydrodipicolinate. The polypeptide is 4-hydroxy-tetrahydrodipicolinate reductase (Shewanella loihica (strain ATCC BAA-1088 / PV-4)).